Here is a 260-residue protein sequence, read N- to C-terminus: Phosphatidate cytidylyltransferase (260 aa).

7 helical membrane-spanning segments follow: residues 9-29 (IIAL…LMLF), 46-66 (MIKF…IIML), 70-90 (AGSW…FILL), 102-122 (FMDA…FMYL), 130-150 (LHYI…AYIF), 172-192 (FVGG…FVDF), and 196-216 (LWLL…GDLV).

It belongs to the CDS family.

It is found in the cell membrane. It carries out the reaction a 1,2-diacyl-sn-glycero-3-phosphate + CTP + H(+) = a CDP-1,2-diacyl-sn-glycerol + diphosphate. The protein operates within phospholipid metabolism; CDP-diacylglycerol biosynthesis; CDP-diacylglycerol from sn-glycerol 3-phosphate: step 3/3. In Staphylococcus saprophyticus subsp. saprophyticus (strain ATCC 15305 / DSM 20229 / NCIMB 8711 / NCTC 7292 / S-41), this protein is Phosphatidate cytidylyltransferase (cdsA).